The chain runs to 602 residues: Aspartate--tRNA(Asp/Asn) ligase (602 aa).

Glu191 contributes to the L-aspartate binding site. The interval 215 to 218 (QLYK) is aspartate. Arg237 provides a ligand contact to L-aspartate. ATP is bound by residues 237–239 (RDE) and Gln246. His465 contacts L-aspartate. Glu499 serves as a coordination point for ATP. Residue Arg506 participates in L-aspartate binding. Position 551 to 554 (551 to 554 (GLDR)) interacts with ATP.

It belongs to the class-II aminoacyl-tRNA synthetase family. Type 1 subfamily. As to quaternary structure, homodimer.

The protein localises to the cytoplasm. It carries out the reaction tRNA(Asx) + L-aspartate + ATP = L-aspartyl-tRNA(Asx) + AMP + diphosphate. In terms of biological role, aspartyl-tRNA synthetase with relaxed tRNA specificity since it is able to aspartylate not only its cognate tRNA(Asp) but also tRNA(Asn). Reaction proceeds in two steps: L-aspartate is first activated by ATP to form Asp-AMP and then transferred to the acceptor end of tRNA(Asp/Asn). The polypeptide is Aspartate--tRNA(Asp/Asn) ligase (Treponema pallidum (strain Nichols)).